Here is a 267-residue protein sequence, read N- to C-terminus: Coiled-coil domain-containing protein 90B, mitochondrial (267 aa).

The transit peptide at methionine 1–phenylalanine 47 directs the protein to the mitochondrion. Positions leucine 142 to isoleucine 175 form a coiled coil. Residues threonine 244–tryptophan 266 traverse the membrane as a helical segment.

This sequence belongs to the CCDC90 family.

It is found in the mitochondrion membrane. This Xenopus tropicalis (Western clawed frog) protein is Coiled-coil domain-containing protein 90B, mitochondrial (ccdc90b).